The following is a 290-amino-acid chain: Small ribosomal subunit biogenesis GTPase RsgA (290 aa).

A CP-type G domain is found at 62–219 (DNYLIRPQVA…VVDTPGFSTL (158 aa)). Residues 111–114 (NKID) and 162–170 (GPSGVGKST) each bind GTP. Residues C243, C248, H250, and C256 each coordinate Zn(2+).

The protein belongs to the TRAFAC class YlqF/YawG GTPase family. RsgA subfamily. Monomer. Associates with 30S ribosomal subunit, binds 16S rRNA. The cofactor is Zn(2+).

The protein localises to the cytoplasm. Functionally, one of several proteins that assist in the late maturation steps of the functional core of the 30S ribosomal subunit. Helps release RbfA from mature subunits. May play a role in the assembly of ribosomal proteins into the subunit. Circularly permuted GTPase that catalyzes slow GTP hydrolysis, GTPase activity is stimulated by the 30S ribosomal subunit. The polypeptide is Small ribosomal subunit biogenesis GTPase RsgA (Clostridium novyi (strain NT)).